Reading from the N-terminus, the 552-residue chain is Low-affinity Fe(2+) transport protein (552 aa).

Topologically, residues 1–97 (MGKIAEFLGN…DFLVRVAGSQ (97 aa)) are extracellular. Lys39 participates in a covalent cross-link: Glycyl lysine isopeptide (Lys-Gly) (interchain with G-Cter in ubiquitin). Ser48 and Ser50 each carry phosphoserine. Residues 98–118 (AVFFIVWIILIIWVVIGIVYN) form a helical membrane-spanning segment. The Cytoplasmic segment spans residues 119 to 225 (APFNWQVVMQ…SNVASRYMGS (107 aa)). A helical transmembrane segment spans residues 226-246 (IAAMVIFWIGIFVWIGCGAIP). The Extracellular segment spans residues 247 to 271 (KDAGNTPPYTGETTGSNPRLKKFSD). A helical transmembrane segment spans residues 272–292 (AWQMYINTAVAVSLLICTTFL). The Cytoplasmic portion of the chain corresponds to 293–354 (QNIRARHDYF…GRKMIDWYAD (62 aa)). A helical membrane pass occupies residues 355 to 375 (IIGTGIGVLIGVAVFATWIGI). Residues 376–383 (GSPMKWDD) are Extracellular-facing. A helical transmembrane segment spans residues 384–404 (NWWLIIGTYTGLIGFLDGFVL). The Cytoplasmic portion of the chain corresponds to 405-465 (REVYFRIVQH…SQYINRICST (61 aa)). The chain crosses the membrane as a helical span at residues 466-486 (PWSVLVSVIIIIGLICIASGL). At 487–493 (RWSTTGQ) the chain is on the extracellular side. The chain crosses the membrane as a helical span at residues 494 to 514 (LIANTPTMIIEEFFLLVLLQA). The Cytoplasmic segment spans residues 515 to 552 (HNWADRQRRVEVTALYARRRILLSYVEKRFPEVMMLEK).

Belongs to the FET4 family.

It localises to the membrane. Functionally, required for Fe(2+) ion low affinity uptake. This is Low-affinity Fe(2+) transport protein (FET4) from Saccharomyces cerevisiae (strain ATCC 204508 / S288c) (Baker's yeast).